The chain runs to 751 residues: Translation initiation factor IF-2, chloroplastic (751 aa).

The segment at 86-156 is disordered; it reads KKEKSKFRKD…KSKKQTSAKN (71 aa). Residues 93-106 are compositionally biased toward basic and acidic residues; it reads RKDEDYDSLKREDN. A compositionally biased stretch (low complexity) spans 129–143; sequence VSNTNTLNKKNVVKS. The region spanning 250-423 is the tr-type G domain; it reads KRPPVIAIMG…ILVSEIEDLK (174 aa). The interval 259–266 is G1; it reads GHVDHGKT. 259 to 266 provides a ligand contact to GTP; that stretch reads GHVDHGKT. A G2 region spans residues 284–288; it reads GITQK. The tract at residues 309 to 312 is G3; sequence DTPG. Residues 309-313 and 363-366 contribute to the GTP site; these read DTPGH and NKID. Residues 363 to 366 are G4; the sequence is NKID. Residues 399–401 form a G5 region; that stretch reads SAM.

It belongs to the TRAFAC class translation factor GTPase superfamily. Classic translation factor GTPase family. IF-2 subfamily.

Its subcellular location is the plastid. It is found in the chloroplast. Functionally, one of the essential components for the initiation of protein synthesis. Protects formylmethionyl-tRNA from spontaneous hydrolysis and promotes its binding to the 30S ribosomal subunits. Also involved in the hydrolysis of GTP during the formation of the 70S ribosomal complex. This is Translation initiation factor IF-2, chloroplastic (infB) from Rhodomonas salina (Cryptomonas salina).